We begin with the raw amino-acid sequence, 143 residues long: 3-hydroxyacyl-[acyl-carrier-protein] dehydratase FabZ (143 aa).

Residue histidine 47 is part of the active site.

It belongs to the thioester dehydratase family. FabZ subfamily.

The protein localises to the cytoplasm. It carries out the reaction a (3R)-hydroxyacyl-[ACP] = a (2E)-enoyl-[ACP] + H2O. In terms of biological role, involved in unsaturated fatty acids biosynthesis. Catalyzes the dehydration of short chain beta-hydroxyacyl-ACPs and long chain saturated and unsaturated beta-hydroxyacyl-ACPs. This is 3-hydroxyacyl-[acyl-carrier-protein] dehydratase FabZ from Rickettsia canadensis (strain McKiel).